The following is a 400-amino-acid chain: Phosphoglycerate kinase (400 aa).

Substrate is bound by residues 24 to 26 (DFN), arginine 40, 63 to 66 (HFGR), arginine 121, and arginine 154. Residues lysine 205, glycine 296, glutamate 327, and 356–359 (GGDS) contribute to the ATP site.

It belongs to the phosphoglycerate kinase family. Monomer.

The protein resides in the cytoplasm. It catalyses the reaction (2R)-3-phosphoglycerate + ATP = (2R)-3-phospho-glyceroyl phosphate + ADP. The protein operates within carbohydrate degradation; glycolysis; pyruvate from D-glyceraldehyde 3-phosphate: step 2/5. The chain is Phosphoglycerate kinase from Thermosynechococcus vestitus (strain NIES-2133 / IAM M-273 / BP-1).